Here is a 117-residue protein sequence, read N- to C-terminus: Large-conductance mechanosensitive channel (117 aa).

Helical transmembrane passes span 7–27 (EFAL…GAAF), 30–50 (IVTS…FGSV), and 64–84 (GLFI…FIFV).

Belongs to the MscL family. In terms of assembly, homopentamer.

The protein resides in the cell membrane. Channel that opens in response to stretch forces in the membrane lipid bilayer. May participate in the regulation of osmotic pressure changes within the cell. This Staphylococcus haemolyticus (strain JCSC1435) protein is Large-conductance mechanosensitive channel.